A 342-amino-acid polypeptide reads, in one-letter code: Dihydroorotase (342 aa).

Zn(2+) is bound by residues His13 and His15. Substrate-binding positions include 15–17 (HLR) and Asn41. 3 residues coordinate Zn(2+): Lys98, His135, and His173. Lys98 is modified (N6-carboxylysine). His135 is a substrate binding site. Leu218 is a substrate binding site. A Zn(2+)-binding site is contributed by Asp246. Asp246 is a catalytic residue. Substrate-binding residues include His250 and Ala262.

It belongs to the metallo-dependent hydrolases superfamily. DHOase family. Class II DHOase subfamily. As to quaternary structure, homodimer. The cofactor is Zn(2+).

It catalyses the reaction (S)-dihydroorotate + H2O = N-carbamoyl-L-aspartate + H(+). Its pathway is pyrimidine metabolism; UMP biosynthesis via de novo pathway; (S)-dihydroorotate from bicarbonate: step 3/3. In terms of biological role, catalyzes the reversible cyclization of carbamoyl aspartate to dihydroorotate. The chain is Dihydroorotase from Vibrio atlanticus (strain LGP32) (Vibrio splendidus (strain Mel32)).